We begin with the raw amino-acid sequence, 445 residues long: Phosphoglucosamine mutase (445 aa).

Ser99 acts as the Phosphoserine intermediate in catalysis. Mg(2+) contacts are provided by Ser99, Asp242, Asp244, and Asp246. A Phosphoserine modification is found at Ser99.

It belongs to the phosphohexose mutase family. Mg(2+) is required as a cofactor. Post-translationally, activated by phosphorylation.

The enzyme catalyses alpha-D-glucosamine 1-phosphate = D-glucosamine 6-phosphate. Functionally, catalyzes the conversion of glucosamine-6-phosphate to glucosamine-1-phosphate. The sequence is that of Phosphoglucosamine mutase from Nitratiruptor sp. (strain SB155-2).